Reading from the N-terminus, the 345-residue chain is D-alanine--D-alanine ligase (345 aa).

In terms of domain architecture, ATP-grasp spans 133 to 340 (KLYAKERGVK…IDYRYIHQIQ (208 aa)). 162–211 (PLIVKPLRLGSSIGVSIAKNRQELDYALDVAFEFDEAALLEPFMQGIKEY) provides a ligand contact to ATP. Mg(2+)-binding residues include Asp-284, Glu-296, and Asn-298.

The protein belongs to the D-alanine--D-alanine ligase family. Requires Mg(2+) as cofactor. Mn(2+) serves as cofactor.

The protein localises to the cytoplasm. The enzyme catalyses 2 D-alanine + ATP = D-alanyl-D-alanine + ADP + phosphate + H(+). The protein operates within cell wall biogenesis; peptidoglycan biosynthesis. Functionally, cell wall formation. The polypeptide is D-alanine--D-alanine ligase (Wolinella succinogenes (strain ATCC 29543 / DSM 1740 / CCUG 13145 / JCM 31913 / LMG 7466 / NCTC 11488 / FDC 602W) (Vibrio succinogenes)).